The following is a 445-amino-acid chain: Exodeoxyribonuclease 7 large subunit (445 aa).

It belongs to the XseA family. In terms of assembly, heterooligomer composed of large and small subunits.

The protein localises to the cytoplasm. It carries out the reaction Exonucleolytic cleavage in either 5'- to 3'- or 3'- to 5'-direction to yield nucleoside 5'-phosphates.. In terms of biological role, bidirectionally degrades single-stranded DNA into large acid-insoluble oligonucleotides, which are then degraded further into small acid-soluble oligonucleotides. The protein is Exodeoxyribonuclease 7 large subunit of Shewanella oneidensis (strain ATCC 700550 / JCM 31522 / CIP 106686 / LMG 19005 / NCIMB 14063 / MR-1).